A 204-amino-acid chain; its full sequence is Cardiotrophin-2 (204 aa).

A signal peptide spans Met1 to Ala22. An N-linked (GlcNAc...) asparagine glycan is attached at Asn44.

This sequence belongs to the IL-6 superfamily. In terms of assembly, binds to tripartite CNTF receptor complex consisting of CNTF alpha chain, LIFR and IL6ST (in vitro). As to expression, not detected in adult tissues.

It localises to the secreted. Its function is as follows. Increases the platelet count associated with splenomegaly. May have an important role in neuronal precursor development and maturation. The polypeptide is Cardiotrophin-2 (Ctf2) (Mus musculus (Mouse)).